A 252-amino-acid chain; its full sequence is O-methyltransferase hkm8 (252 aa).

Residues Glu-73, 75–76, Ser-81, and Asp-100 contribute to the S-adenosyl-L-methionine site; that span reads GT.

The protein belongs to the class I-like SAM-binding methyltransferase superfamily. Cation-dependent O-methyltransferase family.

Its pathway is secondary metabolite biosynthesis. O-methyltransferase; part of the gene cluster that mediates the biosynthesis of hancockiamides, an unusual new family of N-cinnamoylated piperazines. The NRPS hkm10 and the NmrA-like reductase hkm9 are proposed to convert two molecules of L-Phe to the intermediary piperazine called xenocockiamide A. Xenocockiamide A is then converted to hancockiamide D via a series of hydroxylations and O-methylations. The tyrosinase hkm6 may catalyze an aromatic hydroxylation, then the 2-oxoglutarate-dependent Fe(II) dioxygenase hkm4 and the FAD-dependent phenol hydroxylase hkm7 may catalyze consecutive hydroxylations to install 2 more hydroxy groups, and the methyltransferase hkm8 probably catalyzes two methylations using 2 molecules of S-adenosyl-L-methionine (SAM). The NRPS hkm11 activates and transfers trans-cinnamate supplied by the PAL hkm12 to hancockiamide D and produces hancockiamide A. NRPS Hkm11 has the flexibility to tolerate the bulky hancockiamide G as a substrate and the absence of the acetyl-transferase hkm3 opens up the opportunity for hkm11 to introduce a second N-cinnamoyl moiety. The cytochrome P450 monooxygenase hkm5 catalyzes the methylenedioxy bridge formation, converting hancockiamide A into hancockiamide G. Hkm5 can also convert hancockiamide B into hancockiamide C, and hancockiamide D into hancockiamide H. The N-acetyltransferase hkm3 finally transfers an acetyl group to 1-N of piperazine, converting hancockiamide A into hancockiamide B and hancockiamide G into hancockiamide C. This is O-methyltransferase hkm8 from Aspergillus hancockii.